Here is a 184-residue protein sequence, read N- to C-terminus: MIKMNDITRDGNPVLRKRAEKLTFPLDPKYLKVADEMMEYLKNSQDPAIAEKYHLRAGVGLAAPQIGLSIQMASVLVPGPDNTIDLEETLVNPVIVSQSVQIAALEEGEGCLSVDKDVPGYVPRHDRITVRYQTLDGEEKTIKLRDYPAIVCQHEIDHLKGTLFYDHINKENPLDIEDNAILIG.

Positions 111 and 154 each coordinate Fe cation. The active site involves glutamate 155. Histidine 158 provides a ligand contact to Fe cation.

It belongs to the polypeptide deformylase family. It depends on Fe(2+) as a cofactor.

The catalysed reaction is N-terminal N-formyl-L-methionyl-[peptide] + H2O = N-terminal L-methionyl-[peptide] + formate. Functionally, removes the formyl group from the N-terminal Met of newly synthesized proteins. Requires at least a dipeptide for an efficient rate of reaction. N-terminal L-methionine is a prerequisite for activity but the enzyme has broad specificity at other positions. The sequence is that of Peptide deformylase from Pediococcus pentosaceus (strain ATCC 25745 / CCUG 21536 / LMG 10740 / 183-1w).